Here is a 257-residue protein sequence, read N- to C-terminus: Zinc transporter ZupT (257 aa).

Transmembrane regions (helical) follow at residues L5–G25, V32–M52, G61–L81, A109–V129, L137–A157, I171–I191, L195–L215, and G236–I256. The Fe(2+) site is built by N120 and E123. E123 and H148 together coordinate Zn(2+). The Fe(2+) site is built by N149, E152, and E181. E152 contributes to the Zn(2+) binding site.

Belongs to the ZIP transporter (TC 2.A.5) family. ZupT subfamily.

The protein localises to the cell inner membrane. The catalysed reaction is Zn(2+)(in) = Zn(2+)(out). Its function is as follows. Mediates zinc uptake. May also transport other divalent cations. This Salmonella agona (strain SL483) protein is Zinc transporter ZupT.